Consider the following 100-residue polypeptide: Urease subunit gamma (100 aa).

This sequence belongs to the urease gamma subunit family. Heterotrimer of UreA (gamma), UreB (beta) and UreC (alpha) subunits. Three heterotrimers associate to form the active enzyme.

It is found in the cytoplasm. It catalyses the reaction urea + 2 H2O + H(+) = hydrogencarbonate + 2 NH4(+). It participates in nitrogen metabolism; urea degradation; CO(2) and NH(3) from urea (urease route): step 1/1. In Pseudomonas syringae pv. syringae (strain B728a), this protein is Urease subunit gamma.